Consider the following 158-residue polypeptide: Transcription elongation factor GreA (158 aa).

Positions 45 to 72 (AEYHAAREQQSFIEGRIKQLEGELSHAE) form a coiled coil.

The protein belongs to the GreA/GreB family.

Its function is as follows. Necessary for efficient RNA polymerase transcription elongation past template-encoded arresting sites. The arresting sites in DNA have the property of trapping a certain fraction of elongating RNA polymerases that pass through, resulting in locked ternary complexes. Cleavage of the nascent transcript by cleavage factors such as GreA or GreB allows the resumption of elongation from the new 3'terminus. GreA releases sequences of 2 to 3 nucleotides. This is Transcription elongation factor GreA from Xylella fastidiosa (strain 9a5c).